Consider the following 785-residue polypeptide: Conserved oligomeric Golgi complex subunit 4 (785 aa).

The interval Met1–His24 is disordered. Ala2 is subject to N-acetylalanine. Residues Ala2–Leu84 are interaction with SCFD1. Ser6 carries the post-translational modification Phosphoserine. The interaction with STX5 stretch occupies residues Gln85–Gln153. Residues Pro618–Glu740 form a d domain region. The e domain; essential for proper cell surface glycosylation stretch occupies residues Arg741–Leu785.

The protein belongs to the COG4 family. In terms of assembly, monomer. Component of the conserved oligomeric Golgi (COG) complex which is composed of eight different subunits and is required for normal Golgi morphology and localization. Mediates interaction of SCFD1 with the COG complex. Interacts with STX5.

It localises to the cytoplasm. Its subcellular location is the cytosol. The protein localises to the golgi apparatus membrane. In terms of biological role, required for normal Golgi function. Plays a role in SNARE-pin assembly and Golgi-to-ER retrograde transport via its interaction with SCFD1. This chain is Conserved oligomeric Golgi complex subunit 4 (Cog4), found in Mus musculus (Mouse).